The sequence spans 89 residues: Large ribosomal subunit protein bL27 (89 aa).

Residues 1–24 (MAHKKGTGSTRNGRDSRSQRLGVK) are disordered.

It belongs to the bacterial ribosomal protein bL27 family.

The protein is Large ribosomal subunit protein bL27 of Microcystis aeruginosa (strain NIES-843 / IAM M-2473).